Here is a 130-residue protein sequence, read N- to C-terminus: Small ribosomal subunit protein uS9 (130 aa).

This sequence belongs to the universal ribosomal protein uS9 family.

The sequence is that of Small ribosomal subunit protein uS9 from Thioalkalivibrio sulfidiphilus (strain HL-EbGR7).